The chain runs to 224 residues: Octanoyltransferase (224 aa).

The region spanning 38-213 (SATVDELWWV…YLVRRLGYSA (176 aa)) is the BPL/LPL catalytic domain. Substrate is bound by residues 77 to 84 (RGGQVTYH), 144 to 146 (SLG), and 157 to 159 (GLS). Catalysis depends on C175, which acts as the Acyl-thioester intermediate.

Belongs to the LipB family.

Its subcellular location is the cytoplasm. It carries out the reaction octanoyl-[ACP] + L-lysyl-[protein] = N(6)-octanoyl-L-lysyl-[protein] + holo-[ACP] + H(+). It participates in protein modification; protein lipoylation via endogenous pathway; protein N(6)-(lipoyl)lysine from octanoyl-[acyl-carrier-protein]: step 1/2. In terms of biological role, catalyzes the transfer of endogenously produced octanoic acid from octanoyl-acyl-carrier-protein onto the lipoyl domains of lipoate-dependent enzymes. Lipoyl-ACP can also act as a substrate although octanoyl-ACP is likely to be the physiological substrate. The sequence is that of Octanoyltransferase from Nitrosococcus oceani (strain ATCC 19707 / BCRC 17464 / JCM 30415 / NCIMB 11848 / C-107).